The sequence spans 211 residues: Dof zinc finger protein 5 (211 aa).

The interval 37–101 (FVVAREKVEP…QRRLQDSAEA (65 aa)) is disordered. A compositionally biased stretch (basic and acidic residues) spans 68–80 (IKREAADRDEEQR). The Dof-type zinc-finger motif lies at 109 to 163 (LPCPRCRSRDTKFCYFNNYNVNQPRHFCKACHRYWTAGGALRNVPVGAGRRKNRP). Residues Cys111, Cys114, Cys136, and Cys139 each contribute to the Zn(2+) site. The disordered stretch occupies residues 191–211 (SPTSPSPVYTDRWPVTPDRPF).

The protein localises to the nucleus. In terms of biological role, transcription factor that may transactivate seed storage protein genes in developing seeds. The sequence is that of Dof zinc finger protein 5 from Oryza sativa subsp. japonica (Rice).